Here is a 94-residue protein sequence, read N- to C-terminus: uncharacterized protein (94 aa).

This is an uncharacterized protein from Saccharolobus islandicus (Sulfolobus islandicus).